Reading from the N-terminus, the 574-residue chain is Proline--tRNA ligase (574 aa).

Belongs to the class-II aminoacyl-tRNA synthetase family. ProS type 1 subfamily. In terms of assembly, homodimer.

It localises to the cytoplasm. The enzyme catalyses tRNA(Pro) + L-proline + ATP = L-prolyl-tRNA(Pro) + AMP + diphosphate. Functionally, catalyzes the attachment of proline to tRNA(Pro) in a two-step reaction: proline is first activated by ATP to form Pro-AMP and then transferred to the acceptor end of tRNA(Pro). As ProRS can inadvertently accommodate and process non-cognate amino acids such as alanine and cysteine, to avoid such errors it has two additional distinct editing activities against alanine. One activity is designated as 'pretransfer' editing and involves the tRNA(Pro)-independent hydrolysis of activated Ala-AMP. The other activity is designated 'posttransfer' editing and involves deacylation of mischarged Ala-tRNA(Pro). The misacylated Cys-tRNA(Pro) is not edited by ProRS. This chain is Proline--tRNA ligase, found in Desulfovibrio desulfuricans (strain ATCC 27774 / DSM 6949 / MB).